Here is a 430-residue protein sequence, read N- to C-terminus: tRNA pseudouridine synthase Pus10 (430 aa).

Aspartate 253 (nucleophile) is an active-site residue. Residues tyrosine 320 and tyrosine 392 each contribute to the substrate site.

The protein belongs to the pseudouridine synthase Pus10 family.

It catalyses the reaction uridine(54) in tRNA = pseudouridine(54) in tRNA. The enzyme catalyses uridine(55) in tRNA = pseudouridine(55) in tRNA. Responsible for synthesis of pseudouridine from uracil-54 and uracil-55 in the psi GC loop of transfer RNAs. This chain is tRNA pseudouridine synthase Pus10, found in Ignisphaera aggregans (strain DSM 17230 / JCM 13409 / AQ1.S1).